The sequence spans 306 residues: Proteasome subunit beta (306 aa).

A propeptide spans Met1–Gly67 (removed in mature form; by autocatalysis). The active-site Nucleophile is the Thr68.

Belongs to the peptidase T1B family. As to quaternary structure, the 20S proteasome core is composed of 14 alpha and 14 beta subunits that assemble into four stacked heptameric rings, resulting in a barrel-shaped structure. The two inner rings, each composed of seven catalytic beta subunits, are sandwiched by two outer rings, each composed of seven alpha subunits. The catalytic chamber with the active sites is on the inside of the barrel. Has a gated structure, the ends of the cylinder being occluded by the N-termini of the alpha-subunits. Is capped by the proteasome-associated ATPase, ARC.

It localises to the cytoplasm. The enzyme catalyses Cleavage of peptide bonds with very broad specificity.. It functions in the pathway protein degradation; proteasomal Pup-dependent pathway. The formation of the proteasomal ATPase ARC-20S proteasome complex, likely via the docking of the C-termini of ARC into the intersubunit pockets in the alpha-rings, may trigger opening of the gate for substrate entry. Interconversion between the open-gate and close-gate conformations leads to a dynamic regulation of the 20S proteasome proteolysis activity. Its function is as follows. Component of the proteasome core, a large protease complex with broad specificity involved in protein degradation. The protein is Proteasome subunit beta of Mycolicibacterium vanbaalenii (strain DSM 7251 / JCM 13017 / BCRC 16820 / KCTC 9966 / NRRL B-24157 / PYR-1) (Mycobacterium vanbaalenii).